Consider the following 261-residue polypeptide: uncharacterized protein (261 aa).

An N-terminal signal peptide occupies residues 1–20 (MKIQVMLIIIFVGIFTICLA). N-linked (GlcNAc...) asparagine; by host glycans are attached at residues Asn-22 and Asn-27.

Its subcellular location is the secreted. This is an uncharacterized protein from Acanthamoeba polyphaga (Amoeba).